The following is a 305-amino-acid chain: Endonuclease 1 (305 aa).

The N-terminal stretch at 1–28 (MASAFRSSTRLILVLGILILCSVSSVRS) is a signal peptide. 2 residues coordinate a divalent metal cation: tryptophan 29 and histidine 34. 29–34 (WSKEGH) is a binding site for substrate. A disulfide bridge connects residues cysteine 38 and cysteine 69. A divalent metal cation-binding residues include aspartate 73 and histidine 88. Substrate contacts are provided by residues 73–79 (DQIRHWY), 88–91 (HYID), and 98–103 (SYEYSR). 3 disulfides stabilise this stretch: cysteine 97–cysteine 249, cysteine 105–cysteine 115, and cysteine 230–cysteine 236. Substrate is bound by residues asparagine 122 and tyrosine 139. N-linked (GlcNAc...) asparagine glycosylation is present at asparagine 122. Asparagine 140 carries an N-linked (GlcNAc...) asparagine glycan. 5 residues coordinate a divalent metal cation: histidine 150, aspartate 154, histidine 160, histidine 184, and aspartate 188. Residues 150–199 (HFMGDIHQPMHVGFTSDEGGNTIDLRWYKHKSNLHHVWDREIILTALKEN) are substrate binding. Asparagine 214 carries N-linked (GlcNAc...) asparagine glycosylation. Residues 287 to 305 (MILNRVFSDDHAIAGVAAT) constitute a propeptide, removed in mature form.

This sequence belongs to the nuclease type I family. In terms of assembly, monomer. Requires Mn(2+) as cofactor. Ca(2+) is required as a cofactor. As to expression, mostly expressed in flowers and during leaf and stem senescence, and, to a lower extent, detectable at low levels in roots, leaves, and stems. Particularly expressed in senescing tissues in a NAC92/ORE1-dependent manner.

It catalyses the reaction Endonucleolytic cleavage to 5'-phosphomononucleotide and 5'-phosphooligonucleotide end-products.. Endonuclease that can use RNA, single-stranded and double-stranded DNA as substrates. Hydrolyzes single-stranded DNA and RNA without apparent specificity for bases during senescence. Endonuclease that recognizes and cleaves all types of mismatches with high efficiency, including heteroduplex double-stranded DNA. Maybe involved in programmed cell death (PCD) and senescence. The polypeptide is Endonuclease 1 (Arabidopsis thaliana (Mouse-ear cress)).